We begin with the raw amino-acid sequence, 941 residues long: Pre-mRNA-processing factor 6 (941 aa).

Residues 1–79 (MNKKKKPFLG…DEDLNDTNYD (79 aa)) form a disordered region. Over residues 39–65 (DANDPVDDRHAPPGKRTVGDQMKKNQA) the composition is skewed to basic and acidic residues. The span at 66–78 (ADDDDEDLNDTNY) shows a compositional bias: acidic residues. Phosphoserine is present on serine 143. A phosphothreonine mark is found at threonine 180, threonine 266, and threonine 275. Serine 279 carries the phosphoserine modification. HAT repeat units lie at residues 384–416 (TDIRAKKRVLRKALEHVPNSVRLWKAAVELEEP), 418–444 (DARIMLSRAVECCPTSVELWLALARLE), 445–476 (TYENARKVLNKARENIPTDRHIWITAAKLEEA), 554–586 (NALECARAIYAYALQVFPSKKSVWLRAAYFEKN), 588–620 (GTRESLEALLQRAVAHCPKAEVLWLMGAKSKWL), 622–654 (GDVPAARSILALAFQANPNSEEIWLAAVKLESE), 689–721 (GNITAAQELCEEALRHYEDFPKLWMMKGQIEEQ), 723–755 (ELMERAREAYNQGLKKCPHSTPLWLLLSRLEEK), and 855–887 (RKITKAREWFHRTVKIDSDLGDAWAFFYKFELQ).

Identified in the spliceosome B complex. Identified in the spliceosome C complex. Associates with the U5 snRNP particle. Component of the U4/U6-U5 tri-snRNP complex composed of the U4, U6 and U5 snRNAs and at least PRPF3, PRPF4, PRPF6, PRPF8, PRPF31, SNRNP200, TXNL4A, SNRNP40, DDX23, CD2BP2, PPIH, SNU13, EFTUD2, SART1 and USP39, LSm proteins LSm2-8 and Sm proteins. Interacts with ARAF1. Interacts with AR and NR3C1, but not ESR1, independently of the presence of hormones. Interacts with USH1G. In terms of processing, phosphorylated by PRP4K during spliceosome assembly.

It localises to the nucleus. It is found in the nucleoplasm. The protein localises to the nucleus speckle. Its function is as follows. Involved in pre-mRNA splicing as component of the U4/U6-U5 tri-snRNP complex, one of the building blocks of the spliceosome. Enhances dihydrotestosterone-induced transactivation activity of AR, as well as dexamethasone-induced transactivation activity of NR3C1, but does not affect estrogen-induced transactivation. In Rattus norvegicus (Rat), this protein is Pre-mRNA-processing factor 6 (Prpf6).